The following is a 61-amino-acid chain: Putative neurotoxin-D (61 aa).

The N-terminal stretch at 1–19 is a signal peptide; the sequence is MRTTVAILLVLFALSAILA. 3 cysteine pairs are disulfide-bonded: Cys31–Cys51, Cys37–Cys56, and Cys39–Cys58.

In terms of tissue distribution, expressed by the venom gland.

The protein resides in the secreted. In Lychas mucronatus (Chinese swimming scorpion), this protein is Putative neurotoxin-D.